The sequence spans 170 residues: Flavin reductase (NADPH) (170 aa).

This sequence belongs to the non-flavoprotein flavin reductase family.

The catalysed reaction is reduced riboflavin + NADP(+) = riboflavin + NADPH + 2 H(+). Catalyzes the NADH-dependent reduction of FAD to provide FADH2 for the halogenase RebH. This Lentzea aerocolonigenes (Lechevalieria aerocolonigenes) protein is Flavin reductase (NADPH) (rbmH).